We begin with the raw amino-acid sequence, 865 residues long: General transcription factor 3C polypeptide 5 (865 aa).

Disordered stretches follow at residues 1–21 (MNDE…NNNS), 111–163 (RPNK…NEKF), 191–215 (NNNT…TVPI), 391–522 (QDNH…NKEG), and 669–865 (DNKM…EESE). Composition is skewed to low complexity over residues 7-21 (KNNS…NNNS), 115-126 (QQTQTQTQTQTQ), 140-158 (QSPK…QQPQ), 199-210 (DNVNDSSSSSSS), and 401-411 (SKNNNNNNNNK). Basic and acidic residues-rich tracts occupy residues 412-439 (DSIK…KQEE) and 448-489 (NNEK…KGDD). Composition is skewed to low complexity over residues 508 to 521 (EGNN…NNKE) and 677 to 696 (RSNT…PKST). Composition is skewed to basic and acidic residues over residues 697–713 (QPKE…EPRP), 757–766 (QNKEIDESLK), and 773–786 (MEKD…KNEE). Acidic residues-rich tracts occupy residues 800-820 (DYDD…DFDG) and 839-865 (EDSE…EESE).

This sequence belongs to the TFIIIC subunit 5 family. In terms of assembly, part of the TFIIIC complex.

It localises to the nucleus. Functionally, involved in RNA polymerase III-mediated transcription. Integral, tightly associated component of the DNA-binding TFIIIC2 subcomplex that directly binds tRNA and virus-associated RNA promoters. The protein is General transcription factor 3C polypeptide 5 (gtf3c5) of Dictyostelium discoideum (Social amoeba).